A 460-amino-acid chain; its full sequence is UDP-glycosyltransferase 91C1 (460 aa).

UDP-alpha-D-glucose contacts are provided by residues Thr-283, 335-337, 352-360, and 374-377; these read VPQ, HCGWNSVVE, and LNEQ.

Belongs to the UDP-glycosyltransferase family.

The polypeptide is UDP-glycosyltransferase 91C1 (UGT91C1) (Arabidopsis thaliana (Mouse-ear cress)).